Consider the following 263-residue polypeptide: 3-methyl-2-oxobutanoate hydroxymethyltransferase (263 aa).

Residues D44 and D83 each contribute to the Mg(2+) site. 3-methyl-2-oxobutanoate contacts are provided by residues 44-45, D83, and K113; that span reads DS. E115 serves as a coordination point for Mg(2+). Catalysis depends on E183, which acts as the Proton acceptor.

It belongs to the PanB family. Homodecamer; pentamer of dimers. Mg(2+) is required as a cofactor.

It localises to the cytoplasm. It carries out the reaction 3-methyl-2-oxobutanoate + (6R)-5,10-methylene-5,6,7,8-tetrahydrofolate + H2O = 2-dehydropantoate + (6S)-5,6,7,8-tetrahydrofolate. It functions in the pathway cofactor biosynthesis; (R)-pantothenate biosynthesis; (R)-pantoate from 3-methyl-2-oxobutanoate: step 1/2. Its function is as follows. Catalyzes the reversible reaction in which hydroxymethyl group from 5,10-methylenetetrahydrofolate is transferred onto alpha-ketoisovalerate to form ketopantoate. The protein is 3-methyl-2-oxobutanoate hydroxymethyltransferase of Trichodesmium erythraeum (strain IMS101).